Consider the following 107-residue polypeptide: Large ribosomal subunit protein uL24 (107 aa).

This sequence belongs to the universal ribosomal protein uL24 family. Part of the 50S ribosomal subunit.

In terms of biological role, one of two assembly initiator proteins, it binds directly to the 5'-end of the 23S rRNA, where it nucleates assembly of the 50S subunit. Functionally, one of the proteins that surrounds the polypeptide exit tunnel on the outside of the subunit. This is Large ribosomal subunit protein uL24 from Nitrosomonas eutropha (strain DSM 101675 / C91 / Nm57).